The chain runs to 522 residues: Kelch domain-containing protein 4 (522 aa).

A compositionally biased stretch (basic residues) spans 1-10 (MGKKGKKEKK). Positions 1–33 (MGKKGKKEKKGRGAEKTAAKMEKKVSKRSRKEE) are disordered. A compositionally biased stretch (basic and acidic residues) spans 11–24 (GRGAEKTAAKMEKK). Kelch repeat units follow at residues 77 to 129 (ELIL…VVPQ), 133 to 187 (QLWV…AWKR), 188 to 241 (QLIL…VTPQ), 243 to 289 (GIII…MNPS), and 308 to 361 (QTLF…RRGR). Disordered regions lie at residues 346–378 (QLKGPKSEKKKRRRGRKEESEGGSKLACGGAGT), 402–432 (LAAPGSAGQPRSEDEDSPEEAGSSAPGPCPR), and 481–522 (DPET…GAED). Phosphoserine occurs at positions 413 and 418. A Kelch 6 repeat occupies 443-494 (VLYVYGGMFEAGDRQVTLSDLHCLDLHRMEAWKALVEMDPETQEWLEETDSE).

The chain is Kelch domain-containing protein 4 (KLHDC4) from Pongo abelii (Sumatran orangutan).